The primary structure comprises 143 residues: Large ribosomal subunit protein uL11 (143 aa).

It belongs to the universal ribosomal protein uL11 family. As to quaternary structure, part of the ribosomal stalk of the 50S ribosomal subunit. Interacts with L10 and the large rRNA to form the base of the stalk. L10 forms an elongated spine to which L12 dimers bind in a sequential fashion forming a multimeric L10(L12)X complex. One or more lysine residues are methylated.

Forms part of the ribosomal stalk which helps the ribosome interact with GTP-bound translation factors. The chain is Large ribosomal subunit protein uL11 from Dechloromonas aromatica (strain RCB).